The chain runs to 82 residues: Omega-conotoxin-like TxMKLT1-031 (82 aa).

The first 22 residues, 1–22, serve as a signal peptide directing secretion; the sequence is MKLTCMMIVAVLFLTAWTLVMA. Positions 23-49 are excised as a propeptide; that stretch reads DDSNNGLANLFSKSRDEMEDPEASKLE. 3 disulfides stabilise this stretch: cysteine 53–cysteine 71, cysteine 60–cysteine 76, and cysteine 70–cysteine 81.

This sequence belongs to the conotoxin O1 superfamily. Expressed by the venom duct.

It is found in the secreted. Its function is as follows. Omega-conotoxins act at presynaptic membranes, they bind and block voltage-gated calcium channels (Cav). In Conus textile (Cloth-of-gold cone), this protein is Omega-conotoxin-like TxMKLT1-031.